We begin with the raw amino-acid sequence, 503 residues long: Intracellular exo-alpha-(1-&gt;5)-L-arabinofuranosidase (503 aa).

Glu-27, Asn-72, and Asn-172 together coordinate alpha-L-arabinofuranose. Catalysis depends on Glu-173, which acts as the Proton donor/acceptor. 3 residues coordinate alpha-L-arabinofuranose: Tyr-244, Glu-292, and Gln-352. The Nucleophile role is filled by Glu-292.

It belongs to the glycosyl hydrolase 51 family. In terms of assembly, homohexamer; trimer of dimers.

The protein localises to the cytoplasm. It catalyses the reaction Hydrolysis of terminal non-reducing alpha-L-arabinofuranoside residues in alpha-L-arabinosides.. It functions in the pathway glycan metabolism; L-arabinan degradation. Involved in the degradation of arabinan and is a key enzyme in the complete degradation of the plant cell wall. Catalyzes the cleavage of terminal alpha-(1-&gt;5)-arabinofuranosyl bonds in small oligosaccharides as alpha-(1-&gt;5)-linked arabinobiose/arabinotriose, but does not display significant activity against linear non-substituted arabinan. It is also highly efficient in the cleavage of alpha-(1-&gt;3)-linked arabinoside of xylobiose and of the alpha-(1-&gt;3)-linked arabinoside decorations of polymeric wheat arabinoxylan. It exhibits very low activity against sugar beet arabinan. This Acetivibrio thermocellus (strain ATCC 27405 / DSM 1237 / JCM 9322 / NBRC 103400 / NCIMB 10682 / NRRL B-4536 / VPI 7372) (Clostridium thermocellum) protein is Intracellular exo-alpha-(1-&gt;5)-L-arabinofuranosidase.